The chain runs to 204 residues: Thymidylate kinase (204 aa).

Residue 11–18 coordinates ATP; sequence GLDKSGKT.

Belongs to the thymidylate kinase family.

It catalyses the reaction dTMP + ATP = dTDP + ADP. It participates in pyrimidine metabolism; dTTP biosynthesis. In Ectromelia virus (strain Moscow) (ECTV), this protein is Thymidylate kinase (TMK).